Consider the following 326-residue polypeptide: Ornithine carbamoyltransferase (326 aa).

Carbamoyl phosphate-binding positions include 57-60, glutamine 84, arginine 108, and 135-138; these read STRT and HPTQ. Residues asparagine 169, aspartate 233, and 237-238 contribute to the L-ornithine site; that span reads SM. 275–276 contributes to the carbamoyl phosphate binding site; that stretch reads CL.

It belongs to the aspartate/ornithine carbamoyltransferase superfamily. OTCase family.

The protein localises to the cytoplasm. It carries out the reaction carbamoyl phosphate + L-ornithine = L-citrulline + phosphate + H(+). Its pathway is amino-acid biosynthesis; L-arginine biosynthesis; L-arginine from L-ornithine and carbamoyl phosphate: step 1/3. Reversibly catalyzes the transfer of the carbamoyl group from carbamoyl phosphate (CP) to the N(epsilon) atom of ornithine (ORN) to produce L-citrulline. In Escherichia coli O6:K15:H31 (strain 536 / UPEC), this protein is Ornithine carbamoyltransferase.